The primary structure comprises 377 residues: Probable tRNA pseudouridine synthase D (377 aa).

D89 serves as the catalytic Nucleophile. Positions Y160–T377 constitute a TRUD domain.

This sequence belongs to the pseudouridine synthase TruD family.

It carries out the reaction uridine(13) in tRNA = pseudouridine(13) in tRNA. In terms of biological role, could be responsible for synthesis of pseudouridine from uracil-13 in transfer RNAs. This chain is Probable tRNA pseudouridine synthase D, found in Saccharolobus solfataricus (strain ATCC 35092 / DSM 1617 / JCM 11322 / P2) (Sulfolobus solfataricus).